The sequence spans 345 residues: N-acetyl-gamma-glutamyl-phosphate reductase (345 aa).

Cys-149 is a catalytic residue.

This sequence belongs to the NAGSA dehydrogenase family. Type 1 subfamily.

The protein resides in the cytoplasm. The enzyme catalyses N-acetyl-L-glutamate 5-semialdehyde + phosphate + NADP(+) = N-acetyl-L-glutamyl 5-phosphate + NADPH + H(+). It participates in amino-acid biosynthesis; L-arginine biosynthesis; N(2)-acetyl-L-ornithine from L-glutamate: step 3/4. Its function is as follows. Catalyzes the NADPH-dependent reduction of N-acetyl-5-glutamyl phosphate to yield N-acetyl-L-glutamate 5-semialdehyde. The chain is N-acetyl-gamma-glutamyl-phosphate reductase from Halalkalibacterium halodurans (strain ATCC BAA-125 / DSM 18197 / FERM 7344 / JCM 9153 / C-125) (Bacillus halodurans).